The chain runs to 358 residues: Septin-12 (358 aa).

Positions 1-25 (MDPLRRSPSPCLSSQPSSPSTPPCE) are disordered. A compositionally biased stretch (low complexity) spans 6-18 (RSPSPCLSSQPSS). In terms of domain architecture, Septin-type G spans 46-317 (MGFEFNIMVV…ENYRVIRLNE (272 aa)). The segment at 46-319 (MGFEFNIMVV…YRVIRLNESH (274 aa)) is interaction with SEPTIN7. Residues 56 to 63 (GQSGLGKS) are G1 motif. Residues 56–63 (GQSGLGKS), Thr-89, Gly-115, 195–203 (RADSLTMEE), Gly-251, and Arg-266 each bind GTP. The G3 motif stretch occupies residues 112-115 (DTPG). The tract at residues 194–197 (ARAD) is G4 motif. The tract at residues 258-358 (VNGRCVLGRK…GAHDDSDDEF (101 aa)) is self-association (via N-terminus) to polymerize octameric septin 12-7-6-2/4-2/4-6-7-12 filaments.

The protein belongs to the TRAFAC class TrmE-Era-EngA-EngB-Septin-like GTPase superfamily. Septin GTPase family. In terms of assembly, septins polymerize into heterooligomeric protein complexes that form filaments, and can associate with cellular membranes, actin filaments and microtubules. GTPase activity is required for filament formation. Interacts with SEPTIN6 and SEPTIN11. Self-associates. Component of a septin core octameric complex consisting of SEPTIN12, SEPTIN7, SEPTIN6 and SEPTIN2 or SEPTIN4 in the order 12-7-6-2-2-6-7-12 or 12-7-6-4-4-6-7-12 and located in the sperm annulus; the octamer polymerizes into filaments via the SEPTIN12 N- and C-termini; the SEPTIN12:SEPTIN7 association is mediated by the respective GTP-binding domains. Interacts with SPAG4 and LMNB1. Associates with alpha- and beta-tubulins. Widely expressed. Expressed in lymph node.

The protein localises to the cytoplasm. The protein resides in the cytoskeleton. Its subcellular location is the spindle. It localises to the nucleus. It is found in the cell projection. The protein localises to the cilium. The protein resides in the flagellum. Filament-forming cytoskeletal GTPase. Involved in spermatogenesis. Involved in the morphogenesis of sperm heads and the elongation of sperm tails probably implicating the association with alpha- and beta-tubulins. Forms a filamentous structure with SEPTIN7, SEPTIN6, SEPTIN2 and probably SEPTIN4 at the sperm annulus which is required for the structural integrity and motility of the sperm tail during postmeiotic differentiation. May play a role in cytokinesis (Potential). The polypeptide is Septin-12 (Homo sapiens (Human)).